The primary structure comprises 183 residues: Small ribosomal subunit protein uS4c (183 aa).

The S4 RNA-binding domain occupies 82–143 (MRLDNILFRL…KQRSKALIQN (62 aa)).

It belongs to the universal ribosomal protein uS4 family. As to quaternary structure, part of the 30S ribosomal subunit. Contacts protein S5. The interaction surface between S4 and S5 is involved in control of translational fidelity.

The protein localises to the plastid. Its subcellular location is the chloroplast. One of the primary rRNA binding proteins, it binds directly to 16S rRNA where it nucleates assembly of the body of the 30S subunit. Its function is as follows. With S5 and S12 plays an important role in translational accuracy. In Sparaxis sp. (strain Lejeune 1997), this protein is Small ribosomal subunit protein uS4c (rps4).